The following is a 151-amino-acid chain: Caveolin-3 (151 aa).

The Cytoplasmic portion of the chain corresponds to 1 to 83; the sequence is MMAEEHTDLE…RLLSTLLGVP (83 aa). Residue Lys38 forms a Glycyl lysine isopeptide (Lys-Gly) (interchain with G-Cter in SUMO3) linkage. Residues 64 to 114 are required for interaction with DAG1; it reads TFTVSKYWCYRLLSTLLGVPLALLWGFLFACISFCHIWAVVPCIKSYLIEI. The helical intramembrane region spans 84–104; it reads LALLWGFLFACISFCHIWAVV. Topologically, residues 105–151 are cytoplasmic; sequence PCIKSYLIEIQCISHIYSLCIRTFCNPLFAALGQVCSNIKVMLRKEV.

It belongs to the caveolin family. In terms of assembly, homooligomer. Interacts with DYSF. Interacts with DLG1 and KCNA5; forms a ternary complex. Interacts with DAG1 (via its C-terminal); the interaction prevents binding of DAG1 with DMD. Interacts with TRIM72. Interacts with MUSK; may regulate MUSK signaling. Interacts with POPDC1. Interacts with CAVIN1, CAVIN2 and CAVIN4. In terms of processing, sumoylation with SUMO3 by PIAS4 may reduce agonist-induced internalization and desensitization of adrenergic receptor ABRD2.

The protein resides in the golgi apparatus membrane. Its subcellular location is the cell membrane. It localises to the membrane. The protein localises to the caveola. It is found in the sarcolemma. Functionally, may act as a scaffolding protein within caveolar membranes. Interacts directly with G-protein alpha subunits and can functionally regulate their activity. May also regulate voltage-gated potassium channels. Plays a role in the sarcolemma repair mechanism of both skeletal muscle and cardiomyocytes that permits rapid resealing of membranes disrupted by mechanical stress. Mediates the recruitment of CAVIN2 and CAVIN3 proteins to the caveolae. In Bos taurus (Bovine), this protein is Caveolin-3 (CAV3).